A 270-amino-acid chain; its full sequence is tRNA pseudouridine synthase A (270 aa).

Asp-51 acts as the Nucleophile in catalysis. Tyr-109 is a substrate binding site.

Belongs to the tRNA pseudouridine synthase TruA family. As to quaternary structure, homodimer.

The catalysed reaction is uridine(38/39/40) in tRNA = pseudouridine(38/39/40) in tRNA. In terms of biological role, formation of pseudouridine at positions 38, 39 and 40 in the anticodon stem and loop of transfer RNAs. This chain is tRNA pseudouridine synthase A, found in Burkholderia multivorans (strain ATCC 17616 / 249).